Consider the following 99-residue polypeptide: C-C motif chemokine 8 (99 aa).

An N-terminal signal peptide occupies residues 1–23; sequence MKVSAGILCLLLVAATFGTQVLA. Q24 is subject to Pyrrolidone carboxylic acid. 2 disulfides stabilise this stretch: C34/C59 and C35/C75.

The protein belongs to the intercrine beta (chemokine CC) family. As to quaternary structure, monomer or homodimer; in equilibrium.

The protein localises to the secreted. Functionally, chemotactic factor that attracts monocytes. This protein can bind heparin. The protein is C-C motif chemokine 8 (CCL8) of Bos taurus (Bovine).